Here is a 104-residue protein sequence, read N- to C-terminus: Co-chaperonin GroES (104 aa).

The protein belongs to the GroES chaperonin family. In terms of assembly, heptamer of 7 subunits arranged in a ring. Interacts with the chaperonin GroEL.

Its subcellular location is the cytoplasm. Functionally, together with the chaperonin GroEL, plays an essential role in assisting protein folding. The GroEL-GroES system forms a nano-cage that allows encapsulation of the non-native substrate proteins and provides a physical environment optimized to promote and accelerate protein folding. GroES binds to the apical surface of the GroEL ring, thereby capping the opening of the GroEL channel. The sequence is that of Co-chaperonin GroES from Acidiphilium cryptum (strain JF-5).